Here is a 240-residue protein sequence, read N- to C-terminus: uncharacterized protein (240 aa).

The disordered stretch occupies residues 93–160 (QEASGCTVGE…AGGGAAASGQ (68 aa)). Composition is skewed to low complexity over residues 110–119 (AQPSQPAQGG) and 129–150 (GGAE…PAEN).

This is an uncharacterized protein from Streptomyces viridochromogenes.